Consider the following 252-residue polypeptide: NLP effector protein Pc118356 (252 aa).

Residues 1 to 17 form the signal peptide; the sequence is MALTVLAATALTALIMG. N20 and N67 each carry an N-linked (GlcNAc...) asparagine glycan. Residues 121–127 carry the Hepta-peptide GHRHDWE motif motif; sequence QDRHFWE. N166 is a glycosylation site (N-linked (GlcNAc...) asparagine).

The protein belongs to the Necrosis inducing protein (NPP1) family.

It is found in the secreted. In terms of biological role, secreted effector that contributes strongly to virulence during infection by P.capsici. The protein is NLP effector protein Pc118356 of Phytophthora capsici.